A 109-amino-acid polypeptide reads, in one-letter code: UPF0060 membrane protein RHA1_ro06609 (109 aa).

4 helical membrane-spanning segments follow: residues Val7–Gly27, Gly33–Leu53, Ile62–Asp82, and Arg88–Pro108.

Belongs to the UPF0060 family.

It localises to the cell membrane. The chain is UPF0060 membrane protein RHA1_ro06609 from Rhodococcus jostii (strain RHA1).